The chain runs to 89 residues: Small ribosomal subunit protein bS20 (89 aa).

Residues 1–20 (MANHKSAEKRARQTIKRTER) are disordered.

This sequence belongs to the bacterial ribosomal protein bS20 family.

Its function is as follows. Binds directly to 16S ribosomal RNA. The chain is Small ribosomal subunit protein bS20 from Campylobacter curvus (strain 525.92).